The sequence spans 31 residues: Cytochrome b6-f complex subunit 6 (31 aa).

Residues Ile4 to Gly24 traverse the membrane as a helical segment.

It belongs to the PetL family. In terms of assembly, the 4 large subunits of the cytochrome b6-f complex are cytochrome b6, subunit IV (17 kDa polypeptide, PetD), cytochrome f and the Rieske protein, while the 4 small subunits are PetG, PetL, PetM and PetN. The complex functions as a dimer.

It is found in the plastid. The protein resides in the chloroplast thylakoid membrane. In terms of biological role, component of the cytochrome b6-f complex, which mediates electron transfer between photosystem II (PSII) and photosystem I (PSI), cyclic electron flow around PSI, and state transitions. PetL is important for photoautotrophic growth as well as for electron transfer efficiency and stability of the cytochrome b6-f complex. The polypeptide is Cytochrome b6-f complex subunit 6 (Oryza sativa subsp. japonica (Rice)).